A 338-amino-acid polypeptide reads, in one-letter code: GTPase Obg (338 aa).

The region spanning 1-159 is the Obg domain; it reads MQFIDEVKIH…RWLRLELKLM (159 aa). The segment at 66–91 is disordered; that stretch reads KAGRGKNGMGKDRHGANGDDLTIPVP. In terms of domain architecture, OBG-type G spans 160–331; the sequence is ADVGLLGFPN…LLDEIARHLW (172 aa). Residues 166 to 173, 191 to 195, 213 to 216, 283 to 286, and 312 to 314 each bind GTP; these read GFPNVGKS, FTTIK, DIPG, NKID, and SAA. Mg(2+) is bound by residues serine 173 and threonine 193.

It belongs to the TRAFAC class OBG-HflX-like GTPase superfamily. OBG GTPase family. Monomer. The cofactor is Mg(2+).

It is found in the cytoplasm. An essential GTPase which binds GTP, GDP and possibly (p)ppGpp with moderate affinity, with high nucleotide exchange rates and a fairly low GTP hydrolysis rate. Plays a role in control of the cell cycle, stress response, ribosome biogenesis and in those bacteria that undergo differentiation, in morphogenesis control. The protein is GTPase Obg of Geobacter metallireducens (strain ATCC 53774 / DSM 7210 / GS-15).